Reading from the N-terminus, the 264-residue chain is Small ribosomal subunit protein eS1 (264 aa).

An N6-acetyllysine; alternate modification is found at Lys-34. Lys-34 participates in a covalent cross-link: Glycyl lysine isopeptide (Lys-Gly) (interchain with G-Cter in SUMO2); alternate. N6-acetyllysine is present on Lys-56. Tyr-155 carries the ADP-ribosyltyrosine modification. The segment at 232–264 is disordered; it reads HGEGSSSGKATGDETGAKVERADGYEPPVQESV. Residues Ser-236 and Ser-237 each carry the phosphoserine modification. Residues 242-255 are compositionally biased toward basic and acidic residues; the sequence is TGDETGAKVERADG. Lys-249 carries the post-translational modification N6-acetyllysine; alternate. Residue Lys-249 forms a Glycyl lysine isopeptide (Lys-Gly) (interchain with G-Cter in SUMO2); alternate linkage. Tyr-256 is subject to Phosphotyrosine. Phosphoserine is present on Ser-263.

The protein belongs to the eukaryotic ribosomal protein eS1 family. As to quaternary structure, component of the small ribosomal subunit. Mature ribosomes consist of a small (40S) and a large (60S) subunit. The 40S subunit contains about 33 different proteins and 1 molecule of RNA (18S). The 60S subunit contains about 49 different proteins and 3 molecules of RNA (28S, 5.8S and 5S). Identified in a IGF2BP1-dependent mRNP granule complex containing untranslated mRNAs. Binds with high affinity to IPO4. Interacts with DDIT3. Part of the small subunit (SSU) processome, composed of more than 70 proteins and the RNA chaperone small nucleolar RNA (snoRNA) U3. Post-translationally, ADP-ribosylated at Tyr-155 by PARP1 in presence of HPF1.

It is found in the cytoplasm. It localises to the nucleus. The protein resides in the nucleolus. Functionally, component of the small ribosomal subunit. The ribosome is a large ribonucleoprotein complex responsible for the synthesis of proteins in the cell. Part of the small subunit (SSU) processome, first precursor of the small eukaryotic ribosomal subunit. During the assembly of the SSU processome in the nucleolus, many ribosome biogenesis factors, an RNA chaperone and ribosomal proteins associate with the nascent pre-rRNA and work in concert to generate RNA folding, modifications, rearrangements and cleavage as well as targeted degradation of pre-ribosomal RNA by the RNA exosome. May play a role during erythropoiesis through regulation of transcription factor DDIT3. The polypeptide is Small ribosomal subunit protein eS1 (Bos taurus (Bovine)).